We begin with the raw amino-acid sequence, 2185 residues long: MGAQVSTQKTGAHETGLNASGNSIIHYTNINYYKDAASNSANRQDFTQDPSKFTEPVKDIMIKSLPALNSPTVEECGYSDRVRSITLGNSTITTQECANVVVGYGVWPDYLKDSEATAEDQPTQPDVATCRFYTLDSVQWQKTSPGWWWKLPDALSNLGLFGQNMQYHYLGRTGYTIHVQCNASKFHQGCLLVVCVPEAEMGCATLNNTPSSAELLGGDSAKEFADKPVASGSNKLVQRVVYNAGMGVGVGNLTIFPHQWINLRTNNSATIVMPYTNSVPMDNMFRHNNVTLMVIPFVPLDYCPGSTTYVPITITIAPMCAEYNGLRLAGHQGLPTMNTPGSCQFLTSDDFQSPSAMPQYDVTPEMRIPGEVKNLMEIAEVDSVVPVQNVGEKVNSMEAYQIPVRSNEGSGTQVFGFPLQPGYSSVFSRTLLGEILNYYTHWSGSIKLTFMFCGSAMATGKFLLAYSPPGAGAPTKRVDAMLGTHVVWDVGLQSSCVLCIPWISQTHYRYVASDEYTAGGFITCWYQTNIVVPADAQSSCYIMCFVSACNDFSVRLLKDTPFISQQNFFQGPVEDAITAAIGRVADTVGTGPTNSEAIPALTAAETGHTSQVVPSDTMQTRHVKNYHSRSESTIENFLCRSACVYFTEYENSGAKRYAEWVITPRQAAQLRRKLEFFTYVRFDLELTFVITSTQQPSTTQNQDAQILTHQIMYVPPGGPVPDKVDSYVWQTSTNPSVFWTEGNAPPRMSVPFLSIGNAYSNFYDGWSEFSRNGVYGINTLNNMGTLYARHVNAGSTGPIKSTIRIYFKPKHVKAWIPRPPRLCQYEKAKNVNFQPSGVTTTRQSITTMTNTGAFGQQSGAVYVGNYRVVNRHLATSADWQNCVWENYNRDLLVSTTTAHGCDIIARCRCTTGVYFCASKNKHYPISFEGPGIVEVQESEYYPRRYQSHVLLAAGFSEPGDCGGILRCEHGVIGIVTMGGEGVVGFADIRDLLWLEDDAMEQGVKDYVEQLGNAFGSGFTNQICEQVNLLKESLVGQDSILEKSLKALVKIISALVIVVRNHDDLITVTATLALIGCTSSPWRWLKQKVSQYYGIPMAERQNNGWLKKFTEMTNACKGMEWIAIKIQKFIEWLKVKILPEVREKHEFLNRLKQLPLLESQIATIEQSAPSQSDQEQLFSNVQYFAHYCRKYAPLYASEAKRVFSLEKKMSNYIQFKSKCRIEPVCLLLHGSPGAGKSVATNLIGRSLAEKLNSSVYSLPPDPDHFDGYKQQAVVIMDDLCQKPDGKDVSLFCQMVSSVDFVPPMAALEEKGILFTSPFVLASTNAGSINAPTVSDSRALARRFHFDMNIEVISMYSQNGKINMPMSVKTCDEECCPVNFKKCCPLVCGKAIQFIDRRTQVRYSLDMLVTEMFREYNHRHSVGATLEALFQGPPVYREIKISVAPETPPPPRIADLLKSVDSEAVREYCKEKGWLVPEVNSTLQIEKHVSRAFICLQAITTFVSVAGIIYIIYKLFAGFQGAYTGIPNQKPKVPTLRQAKVQGPAFEFAVAMMKRNSSTVKTEYGEFTMLGIYDRWAVLPRHAKPGPTILMNDQEVGVLDAKELVDKDGTNLELTLLKLNRNEKFRDIRGFLAKEEVEVNEAVLAINTSKFPNMYIPVGQVTDYGFLNLGGTPTKRMLMYNFPTRAGQCGGVLMSTGKVLGIHVGGNGHQGFSAALLKHYFNDEQGEIEFIESSKEAGFPIINTPSKTKLEPSVFHQVFEGDKEPAVLRNGDPRLKVNFEEAIFSKYIGNVNTHVDEYMMEAVDHYAGQLATLDISTEPMKLEDAVYGTEGLEALDLTTSAGYPYVALGIKKRDILSKKTRDLTKLKECMDKYGLNLPMVTYVKDELRSAEKVAKGKSRLIEASSLNDSVAMRQTFGNLYKTFHLNPGVVTGSAVGCDPDLFWSKIPVMLDGHLIAFDYSGYDASLSPVWFACLKLLLEKLGYSHKETNYIDYLCNSHHLYRDKHYFVRGGMPSGCSGTSIFNSMINNIIIRTLMLKVYKGIDLDQFRMIAYGDDVIASYPWPIDASLLAEAGKDYGLIMTPADKGECFNEVTWTNVTFLKRYFRADEQYPFLVHPVMPMKDIHESIRWTKDPKNTQDHVRSLCLLAWHNGEHEYEEFIRKIRSVPVGRCLTLPAFSTIRRKWLDSF.

Glycine 2 is lipidated: N-myristoyl glycine; by host. Residues 2–1495 (GAQVSTQKTG…HVSRAFICLQ (1494 aa)) are Cytoplasmic-facing. Residues 568–584 (FFQGPVEDAITAAIGRV) form an amphipathic alpha-helix region. Active-site for protease 2A activity residues include histidine 872 and aspartate 890. Residues cysteine 907 and cysteine 909 each coordinate Zn(2+). Cysteine 961 serves as the catalytic For protease 2A activity. Residues cysteine 967 and histidine 969 each coordinate Zn(2+). A membrane-binding region spans residues 1101-1173 (NNGWLKKFTE…EQSAPSQSDQ (73 aa)). The interval 1101–1239 (NNGWLKKFTE…SPGAGKSVAT (139 aa)) is oligomerization. Residues 1122–1126 (AIKIQ) are RNA-binding. The 157-residue stretch at 1205-1361 (EKKMSNYIQF…SMYSQNGKIN (157 aa)) folds into the SF3 helicase domain. Cysteine 1369, cysteine 1381, and cysteine 1386 together coordinate Zn(2+). The C4-type; degenerate zinc finger occupies 1369–1386 (CDEECCPVNFKKCCPLVC). Residues 1413 to 1420 (EYNHRHSV) form an RNA-binding region. Residues 1424 to 1429 (LEALFQ) form an oligomerization region. The stretch at 1496 to 1511 (AITTFVSVAGIIYIIY) is an intramembrane region. At 1512-2185 (KLFAGFQGAY…TIRRKWLDSF (674 aa)) the chain is on the cytoplasmic side. Tyrosine 1521 carries the O-(5'-phospho-RNA)-tyrosine modification. In terms of domain architecture, Peptidase C3 spans 1541–1719 (GPAFEFAVAM…FSAALLKHYF (179 aa)). Active-site for protease 3C activity residues include histidine 1580, glutamate 1611, and cysteine 1687. The region spanning 1950–2066 (GHLIAFDYSG…SYPWPIDASL (117 aa)) is the RdRp catalytic domain. 2 residues coordinate Mg(2+): aspartate 1956 and aspartate 2052.

This sequence belongs to the picornaviruses polyprotein family. As to quaternary structure, interacts with capsid protein VP1 and capsid protein VP3 to form heterotrimeric protomers. In terms of assembly, interacts with capsid protein VP0, and capsid protein VP3 to form heterotrimeric protomers. Five protomers subsequently associate to form pentamers which serve as building blocks for the capsid. Interacts with capsid protein VP2, capsid protein VP3 and capsid protein VP4 following cleavage of capsid protein VP0. Interacts with host CD55. Interacts with host CXADR. Interacts with capsid protein VP1 and capsid protein VP3 in the mature capsid. As to quaternary structure, interacts with capsid protein VP0 and capsid protein VP1 to form heterotrimeric protomers. Five protomers subsequently associate to form pentamers which serve as building blocks for the capsid. Interacts with capsid protein VP4 in the mature capsid. Interacts with protein 2C; this interaction may be important for virion morphogenesis. In terms of assembly, interacts with capsid protein VP1 and capsid protein VP3. Homodimer. As to quaternary structure, homohexamer; forms a hexameric ring structure with 6-fold symmetry characteristic of AAA+ ATPases. Interacts (via N-terminus) with host RTN3 (via reticulon domain); this interaction is important for viral replication. Interacts with capsid protein VP3; this interaction may be important for virion morphogenesis. In terms of assembly, interacts with protein 3CD. Homodimer. Interacts with host GBF1. Interacts (via GOLD domain) with host ACBD3 (via GOLD domain); this interaction allows the formation of a viral protein 3A/ACBD3 heterotetramer with a 2:2 stoichiometry, which will stimulate the recruitment of host PI4KB in order to synthesize PI4P at the viral RNA replication sites. As to quaternary structure, interacts with RNA-directed RNA polymerase. In terms of assembly, interacts with host TICAM1 (via C-terminus). Interacts with protein 3AB and with RNA-directed RNA polymerase. As to quaternary structure, interacts with Viral protein genome-linked and with protein 3CD. Mg(2+) is required as a cofactor. Specific enzymatic cleavages in vivo by the viral proteases yield processing intermediates and the mature proteins. In terms of processing, myristoylation is required for the formation of pentamers during virus assembly. Further assembly of 12 pentamers and a molecule of genomic RNA generates the provirion. Post-translationally, during virion maturation, immature virions are rendered infectious following cleavage of VP0 into VP4 and VP2. This maturation seems to be an autocatalytic event triggered by the presence of RNA in the capsid and it is followed by a conformational change infectious virion. Myristoylation is required during RNA encapsidation and formation of the mature virus particle. In terms of processing, VPg is uridylylated by the polymerase into VPg-pUpU. This acts as a nucleotide-peptide primer for the genomic RNA replication.

It is found in the virion. The protein resides in the host cytoplasm. The protein localises to the host cytoplasmic vesicle membrane. It localises to the host nucleus. The enzyme catalyses a ribonucleoside 5'-triphosphate + H2O = a ribonucleoside 5'-diphosphate + phosphate + H(+). The catalysed reaction is Selective cleavage of Tyr-|-Gly bond in the picornavirus polyprotein.. It catalyses the reaction RNA(n) + a ribonucleoside 5'-triphosphate = RNA(n+1) + diphosphate. It carries out the reaction Selective cleavage of Gln-|-Gly bond in the poliovirus polyprotein. In other picornavirus reactions Glu may be substituted for Gln, and Ser or Thr for Gly.. With respect to regulation, replication or transcription is subject to high level of random mutations by the nucleotide analog ribavirin. Forms an icosahedral capsid of pseudo T=3 symmetry with capsid proteins VP2 and VP3. The capsid is 300 Angstroms in diameter, composed of 60 copies of each capsid protein and enclosing the viral positive strand RNA genome. Capsid protein VP1 mainly forms the vertices of the capsid. Capsid protein VP1 interacts with host cell receptors CD55 and CXADR to provide virion attachment to target host cells. This attachment induces virion internalization. Tyrosine kinases are probably involved in the entry process. After binding to its receptor, the capsid undergoes conformational changes. Capsid protein VP1 N-terminus (that contains an amphipathic alpha-helix) and capsid protein VP4 are externalized. Together, they shape a pore in the host membrane through which viral genome is translocated to host cell cytoplasm. Its function is as follows. Forms an icosahedral capsid of pseudo T=3 symmetry with capsid proteins VP2 and VP3. The capsid is 300 Angstroms in diameter, composed of 60 copies of each capsid protein and enclosing the viral positive strand RNA genome. Functionally, lies on the inner surface of the capsid shell. After binding to the host receptor, the capsid undergoes conformational changes. Capsid protein VP4 is released, Capsid protein VP1 N-terminus is externalized, and together, they shape a pore in the host membrane through which the viral genome is translocated into the host cell cytoplasm. In terms of biological role, component of immature procapsids, which is cleaved into capsid proteins VP4 and VP2 after maturation. Allows the capsid to remain inactive before the maturation step. Cysteine protease that cleaves viral polyprotein and specific host proteins. It is responsible for the autocatalytic cleavage between the P1 and P2 regions, which is the first cleavage occurring in the polyprotein. Also cleaves the host translation initiation factor EIF4G1, in order to shut down the capped cellular mRNA translation. Inhibits the host nucleus-cytoplasm protein and RNA trafficking by cleaving host members of the nuclear pores. Counteracts stress granule formation probably by antagonizing its assembly or promoting its dissassembly. Cleaves and inhibits host IFIH1/MDA5, thereby inhibiting the type-I IFN production and the establishment of the antiviral state. Cleaves and inhibits host MAVS, thereby inhibiting the type-I IFN production and the establishment of the antiviral state. Its function is as follows. Plays an essential role in the virus replication cycle by acting as a viroporin. Creates a pore in the host endoplasmic reticulum and as a consequence releases Ca2+ in the cytoplasm of infected cell. In turn, high levels of cytoplasmic calcium may trigger membrane trafficking and transport of viral ER-associated proteins to viroplasms, sites of viral genome replication. Functionally, induces and associates with structural rearrangements of intracellular membranes. Displays RNA-binding, nucleotide binding and NTPase activities. May play a role in virion morphogenesis and viral RNA encapsidation by interacting with the capsid protein VP3. In terms of biological role, localizes the viral replication complex to the surface of membranous vesicles. Together with protein 3CD binds the Cis-Active RNA Element (CRE) which is involved in RNA synthesis initiation. Acts as a cofactor to stimulate the activity of 3D polymerase, maybe through a nucleid acid chaperone activity. Localizes the viral replication complex to the surface of membranous vesicles. It inhibits host cell endoplasmic reticulum-to-Golgi apparatus transport and causes the disassembly of the Golgi complex, possibly through GBF1 interaction. This would result in depletion of MHC, trail receptors and IFN receptors at the host cell surface. Plays an essential role in viral RNA replication by recruiting ACBD3 and PI4KB at the viral replication sites, thereby allowing the formation of the rearranged membranous structures where viral replication takes place. Its function is as follows. Acts as a primer for viral RNA replication and remains covalently bound to viral genomic RNA. VPg is uridylylated prior to priming replication into VPg-pUpU. The oriI viral genomic sequence may act as a template for this. The VPg-pUpU is then used as primer on the genomic RNA poly(A) by the RNA-dependent RNA polymerase to replicate the viral genome. During genome replication, the VPg-RNA linkage is removed by the host TDP2, thereby accelerating replication. During the late stage of the replication cycle, host TDP2 is excluded from sites of viral RNA synthesis and encapsidation, allowing for the generation of progeny virions. Functionally, involved in the viral replication complex and viral polypeptide maturation. It exhibits protease activity with a specificity and catalytic efficiency that is different from protease 3C. Protein 3CD lacks polymerase activity. Protein 3CD binds to the 5'UTR of the viral genome. In terms of biological role, major viral protease that mediates proteolytic processing of the polyprotein. Cleaves host EIF5B, contributing to host translation shutoff. Also cleaves host PABPC1, contributing to host translation shutoff. Cleaves and inhibits host RIGI, thereby inhibiting the type-I IFN production and the establishment of the antiviral state. Cleaves and inhibits host MAVS, thereby inhibiting the type-I IFN production and the establishment of the antiviral state. Cleaves and inhibits host TICAM1/TRIF, thereby inhibiting the type-I IFN production. Cleaves host NLRP1, triggers host N-glycine-mediated degradation of the autoinhibitory NLRP1 N-terminal fragment. Replicates the viral genomic RNA on the surface of intracellular membranes. May form linear arrays of subunits that propagate along a strong head-to-tail interaction called interface-I. Covalently attaches UMP to a tyrosine of VPg, which is used to prime RNA synthesis. The positive stranded RNA genome is first replicated at virus induced membranous vesicles, creating a dsRNA genomic replication form. This dsRNA is then used as template to synthesize positive stranded RNA genomes. ss(+)RNA genomes are either translated, replicated or encapsidated. This chain is Genome polyprotein, found in Homo sapiens (Human).